The primary structure comprises 3674 residues: Spectrin beta chain, non-erythrocytic 5 (3674 aa).

The interval Met-1 to Asp-37 is disordered. An actin-binding region spans residues Met-1–His-279. Calponin-homology (CH) domains lie at Gln-54–Gln-159 and Leu-177–Ser-282. Spectrin repeat units lie at residues Leu-307–Gln-416, Ala-428–Val-529, Ala-642–Gln-742, Val-747–Ala-810, Gly-900–Leu-996, Ala-1103–Glu-1206, Glu-1209–Leu-1311, and Gln-1315–Gln-1417. The disordered stretch occupies residues Ala-1441 to Arg-1469. Residues Leu-1442–Arg-1456 are compositionally biased toward polar residues. 19 Spectrin repeats span residues Glu-1521–Gln-1624, Phe-1628–Glu-1727, Arg-1731–Asp-1835, Val-1842–Glu-1940, Leu-1944–Gln-2046, Gln-2052–His-2146, Leu-2150–Asp-2253, Asn-2256–Glu-2361, Ile-2366–Asp-2467, Gln-2471–Gln-2574, Glu-2577–Glu-2680, Gln-2683–Gln-2784, Arg-2791–Glu-2890, Leu-2894–Gln-2997, Glu-3000–Glu-3103, Gln-3106–Ala-3209, Glu-3213–Ala-3311, Ala-3318–Arg-3415, and Leu-3422–Leu-3488. The region spanning Thr-3533–Ala-3641 is the PH domain.

It belongs to the spectrin family. As to quaternary structure, probably associates with an alpha chain. Interacts (via C-terminus) with TRPC4. In terms of tissue distribution, expressed at very low levels in many tissues, with strongest expression in cerebellum, spinal cord, stomach, pituitary gland, liver, pancreas, salivary gland, kidney, bladder, and heart.

Its subcellular location is the cytoplasm. It is found in the cytoskeleton. This chain is Spectrin beta chain, non-erythrocytic 5 (SPTBN5), found in Homo sapiens (Human).